A 449-amino-acid polypeptide reads, in one-letter code: UNC93-like protein MFSD11 (449 aa).

The chain crosses the membrane as a helical span at residues 8–28 (LFNIIILGVAFMFMFTAFQTC). Asn40 carries an N-linked (GlcNAc...) asparagine glycan. 5 helical membrane passes run 53-73 (AIIY…VAIV), 74-94 (GPQL…AVFN), 96-116 (PFPW…AVLW), 138-158 (IFWA…YFAW), and 170-190 (RTVF…FFLI). Position 204 is a phosphoserine (Ser204). The next 6 membrane-spanning stretches (helical) occupy residues 239–259 (MLLL…FSGV), 277–297 (LIGL…SLFG), 309–329 (PVVL…FLNM), 359–379 (FLLG…LGFL), 385–405 (APAF…AFFY), and 410–430 (LLHW…LSFF).

This sequence belongs to the unc-93 family.

The protein resides in the membrane. In Pongo abelii (Sumatran orangutan), this protein is UNC93-like protein MFSD11 (MFSD11).